The chain runs to 199 residues: N-(5'-phosphoribosyl)anthranilate isomerase (199 aa).

This sequence belongs to the TrpF family.

It catalyses the reaction N-(5-phospho-beta-D-ribosyl)anthranilate = 1-(2-carboxyphenylamino)-1-deoxy-D-ribulose 5-phosphate. Its pathway is amino-acid biosynthesis; L-tryptophan biosynthesis; L-tryptophan from chorismate: step 3/5. This chain is N-(5'-phosphoribosyl)anthranilate isomerase, found in Campylobacter jejuni subsp. jejuni serotype O:6 (strain 81116 / NCTC 11828).